Consider the following 67-residue polypeptide: Protein AaeX (67 aa).

Helical transmembrane passes span 3 to 23 and 43 to 63; these read LFPV…ELLL and FVWH…YLIS.

Belongs to the AaeX family.

It localises to the cell membrane. This is Protein AaeX from Salmonella agona (strain SL483).